The following is a 198-amino-acid chain: Pyridoxine/pyridoxamine 5'-phosphate oxidase (198 aa).

FMN contacts are provided by residues 47–52 (RMVLVK), 62–63 (FT), Arg-68, Lys-69, and Gln-91. Lys-52 is a binding site for substrate. Substrate contacts are provided by Tyr-109, Arg-113, and Ser-117. FMN-binding positions include 126-127 (QS) and Trp-171. Residue 177 to 179 (RLH) coordinates substrate. Position 181 (Arg-181) interacts with FMN.

Belongs to the pyridoxamine 5'-phosphate oxidase family. As to quaternary structure, homodimer. FMN is required as a cofactor.

It catalyses the reaction pyridoxamine 5'-phosphate + O2 + H2O = pyridoxal 5'-phosphate + H2O2 + NH4(+). The enzyme catalyses pyridoxine 5'-phosphate + O2 = pyridoxal 5'-phosphate + H2O2. Its pathway is cofactor metabolism; pyridoxal 5'-phosphate salvage; pyridoxal 5'-phosphate from pyridoxamine 5'-phosphate: step 1/1. It functions in the pathway cofactor metabolism; pyridoxal 5'-phosphate salvage; pyridoxal 5'-phosphate from pyridoxine 5'-phosphate: step 1/1. Functionally, catalyzes the oxidation of either pyridoxine 5'-phosphate (PNP) or pyridoxamine 5'-phosphate (PMP) into pyridoxal 5'-phosphate (PLP). The chain is Pyridoxine/pyridoxamine 5'-phosphate oxidase from Anaeromyxobacter dehalogenans (strain 2CP-C).